Here is a 193-residue protein sequence, read N- to C-terminus: Dual-action ribosomal maturation protein DarP (193 aa).

Positions 1–10 are enriched in basic and acidic residues; sequence MRGRDEDTGE. Disordered stretches follow at residues 1–20 and 170–193; these read MRGRDEDTGEFRGASRSQQR and SQKPGLESGDAGLEDEESASENDE. The segment covering 181–193 has biased composition (acidic residues); sequence GLEDEESASENDE.

The protein belongs to the DarP family.

Its subcellular location is the cytoplasm. Functionally, member of a network of 50S ribosomal subunit biogenesis factors which assembles along the 30S-50S interface, preventing incorrect 23S rRNA structures from forming. Promotes peptidyl transferase center (PTC) maturation. This is Dual-action ribosomal maturation protein DarP from Xanthomonas campestris pv. campestris (strain 8004).